A 447-amino-acid chain; its full sequence is SNF1-related protein kinase regulatory subunit gamma-1-like (447 aa).

A2 is modified (N-acetylalanine). S35 is modified (phosphoserine). 4 CBS domains span residues 54 to 120, 214 to 275, 292 to 350, and 374 to 433; these read QVPG…SAEL, SFRW…GRDW, MSPN…PEVF, and LAIP…PNYF.

Belongs to the 5'-AMP-activated protein kinase gamma subunit family. As to quaternary structure, subunit of a probable heterotrimeric complex consisting of an alpha catalytic (KIN10 or KIN11) subunit, and a beta (KINB) and a gamma (KING or SNF4) non-catalytic regulatory subunits.

Its function is as follows. Regulatory subunit of the probable trimeric SNF1-related protein kinase (SnRK) complex, which may play a role in a signal transduction cascade regulating gene expression and carbohydrate metabolism in higher plants. This is SNF1-related protein kinase regulatory subunit gamma-1-like (CBSCBS2) from Arabidopsis thaliana (Mouse-ear cress).